The sequence spans 407 residues: Argininosuccinate synthase (407 aa).

ATP is bound by residues 12–20 (AFSGGLDTS) and alanine 39. L-citrulline-binding residues include tyrosine 90 and serine 95. Glycine 120 is a binding site for ATP. L-aspartate-binding residues include threonine 122, asparagine 126, and aspartate 127. L-citrulline is bound at residue asparagine 126. 5 residues coordinate L-citrulline: arginine 130, serine 181, serine 190, glutamate 266, and tyrosine 278.

Belongs to the argininosuccinate synthase family. Type 1 subfamily. In terms of assembly, homotetramer.

The protein resides in the cytoplasm. It catalyses the reaction L-citrulline + L-aspartate + ATP = 2-(N(omega)-L-arginino)succinate + AMP + diphosphate + H(+). The protein operates within amino-acid biosynthesis; L-arginine biosynthesis; L-arginine from L-ornithine and carbamoyl phosphate: step 2/3. In Nitrosospira multiformis (strain ATCC 25196 / NCIMB 11849 / C 71), this protein is Argininosuccinate synthase.